Here is a 193-residue protein sequence, read N- to C-terminus: Ribonuclease HII (193 aa).

The RNase H type-2 domain maps to 15–193; it reads YIVAGVDEAG…SYHRRSFKSC (179 aa). Residues Asp21, Glu22, and Asp112 each contribute to the a divalent metal cation site.

It belongs to the RNase HII family. The cofactor is Mn(2+). Mg(2+) is required as a cofactor.

It localises to the cytoplasm. It catalyses the reaction Endonucleolytic cleavage to 5'-phosphomonoester.. In terms of biological role, endonuclease that specifically degrades the RNA of RNA-DNA hybrids. This is Ribonuclease HII (rnhB) from Rickettsia prowazekii (strain Madrid E).